Reading from the N-terminus, the 354-residue chain is Uroporphyrinogen decarboxylase (354 aa).

Residues 27-31 (RQAGR), D77, Y154, T209, and H327 each bind substrate.

This sequence belongs to the uroporphyrinogen decarboxylase family. In terms of assembly, homodimer.

It is found in the cytoplasm. It carries out the reaction uroporphyrinogen III + 4 H(+) = coproporphyrinogen III + 4 CO2. Its pathway is porphyrin-containing compound metabolism; protoporphyrin-IX biosynthesis; coproporphyrinogen-III from 5-aminolevulinate: step 4/4. In terms of biological role, catalyzes the decarboxylation of four acetate groups of uroporphyrinogen-III to yield coproporphyrinogen-III. The protein is Uroporphyrinogen decarboxylase of Enterobacter sp. (strain 638).